Reading from the N-terminus, the 157-residue chain is Small ribosomal subunit protein uS7 (157 aa).

This sequence belongs to the universal ribosomal protein uS7 family. Part of the 30S ribosomal subunit. Contacts proteins S9 and S11.

One of the primary rRNA binding proteins, it binds directly to 16S rRNA where it nucleates assembly of the head domain of the 30S subunit. Is located at the subunit interface close to the decoding center, probably blocks exit of the E-site tRNA. The polypeptide is Small ribosomal subunit protein uS7 (Chlamydia trachomatis serovar A (strain ATCC VR-571B / DSM 19440 / HAR-13)).